Reading from the N-terminus, the 329-residue chain is Lipoyl synthase (329 aa).

Cys-72, Cys-77, Cys-83, Cys-98, Cys-102, Cys-105, and Ser-313 together coordinate [4Fe-4S] cluster. The region spanning 83-303 (CWSHGTATIM…QIGLKKGFFE (221 aa)) is the Radical SAM core domain.

It belongs to the radical SAM superfamily. Lipoyl synthase family. It depends on [4Fe-4S] cluster as a cofactor.

Its subcellular location is the cytoplasm. It carries out the reaction [[Fe-S] cluster scaffold protein carrying a second [4Fe-4S](2+) cluster] + N(6)-octanoyl-L-lysyl-[protein] + 2 oxidized [2Fe-2S]-[ferredoxin] + 2 S-adenosyl-L-methionine + 4 H(+) = [[Fe-S] cluster scaffold protein] + N(6)-[(R)-dihydrolipoyl]-L-lysyl-[protein] + 4 Fe(3+) + 2 hydrogen sulfide + 2 5'-deoxyadenosine + 2 L-methionine + 2 reduced [2Fe-2S]-[ferredoxin]. The protein operates within protein modification; protein lipoylation via endogenous pathway; protein N(6)-(lipoyl)lysine from octanoyl-[acyl-carrier-protein]: step 2/2. Functionally, catalyzes the radical-mediated insertion of two sulfur atoms into the C-6 and C-8 positions of the octanoyl moiety bound to the lipoyl domains of lipoate-dependent enzymes, thereby converting the octanoylated domains into lipoylated derivatives. This Legionella pneumophila (strain Paris) protein is Lipoyl synthase.